The sequence spans 1037 residues: MACLSRIDANLLQYYEKPEPNNTVDLYVSNNSNNNGLKEGDKSISTPVPQPYGSEYSNCLLLSNSEYICYHFSSRSTLLTFYPLSDAYHGKTINIHLPNASMNQRYTLTIQEVEQQLLVNVILKDGSFLTLQLPLSFLFSSANTLNGEWFHLQNPYDFTVRVPHFLFYVSPQFSVVFLEDGGLLGLKKVDGVHYEPLLFNDNSYLKSLTRFFSRSSKSDYDSVISCKLFHERYLIVLTQNCHLKIWDLTSFTLIQDYDMVSQSDSDPSHFRKVEAVGEYLSLYNNTLVTLLPLENGLFQMGTLLVDSSGILTYTFQNNIPTNLSASAIWSIVDLVLTRPLELNVEASYLNLIVLWKSGTASKLQILNVNDESFKNYEWIESVNKSLVDLQSEHDLDIVTKTGDVERGFCNLKSRYGTQIFERAQQILSENKIIMAHNEDEEYLANLETILRDVKTAFNEASSITLYGDEIILVNCFQPYNHSLYKLNTTVENWFYNMHSETDGSELFKYLRTLNGFASTLSNDVLRSISKKFLDIITGELPDSMTTVEKFTDIFKNCLENQFEITNLKILFDELNSFDIPVVLNDLINNQMKPGIFWKKDFISAIKFDGFTSIISLESLHQLLSIHYRITLQVLLTFVLFDLDTEIFGQHISTLLDLHYKQFLLLNLYRQDKCLLAEVLLKDSSEFSFGVKFFNYGQLIAYIDSLNSNVYNASITENSFFMTFFRSYIIENTSHKNIRFFLENVECPFYLRHNEVQEFMFAMTLFSCGNFDQSYEIFQLHDYPEAINDKLPTFLEDLKSENYHGDSIWKDLLCTFTVPYRHSAFYYQLSLLFDRNNSQEFALKCISKSAEYSLKEIQIEELQDFKEKQHIHYLNLLIHFRMFEEVLDVLRLGHECLSDTVRTNFLQLLLQEDIYSRDFFSTLLRLCNAHSDNGELYLRTVDIKIVDSILSQNLRSGDWECFKKLYCFRMLNKSERAAAEVLYQYILMQADLDVIRKRKCYLMVINVLSSFDSAYDQWILNGSKVVTLTDLRDELRGL.

2 leucine-zipper regions span residues 131–152 (LQLP…WFHL) and 290–311 (LLPL…SGIL). The residue at position 417 (threonine 417) is a Phosphothreonine.

In terms of assembly, component of the nuclear pore complex (NPC). NPC constitutes the exclusive means of nucleocytoplasmic transport. NPCs allow the passive diffusion of ions and small molecules and the active, nuclear transport receptor-mediated bidirectional transport of macromolecules such as proteins, RNAs, ribonucleoparticles (RNPs), and ribosomal subunits across the nuclear envelope. Due to its 8-fold rotational symmetry, all subunits are present with 8 copies or multiples thereof. NUP120 is part of the heptameric 0.5 MDa autoassembling NUP84 NPC subcomplex (NUP84, NUP85, NUP120, NUP133, NUP145C, SEC13 and SEH1).

It is found in the nucleus. The protein localises to the nuclear pore complex. It localises to the nucleus membrane. Functions as a component of the nuclear pore complex (NPC). NPC components, collectively referred to as nucleoporins (NUPs), can play the role of both NPC structural components and of docking or interaction partners for transiently associated nuclear transport factors. NUP120 is involved in nuclear poly(A)+ RNA and pre-ribosome export, in GSP1 nuclear import, in NPC assembly and distribution, as well as in nuclear envelope organization. The polypeptide is Nucleoporin NUP120 (NUP120) (Saccharomyces cerevisiae (strain ATCC 204508 / S288c) (Baker's yeast)).